The primary structure comprises 3582 residues: Ubiquitin carboxyl-terminal hydrolase 34 (3582 aa).

A phosphoserine mark is found at Ser-352, Ser-486, Ser-487, and Ser-490. 5 disordered regions span residues 503-533 (EEEE…HQSG), 551-670 (QQRL…ELRN), 682-705 (GESQ…VFNT), 775-801 (HHHH…DGHM), and 1496-1515 (TGSY…DQVE). A compositionally biased stretch (low complexity) spans 510–524 (AAPSPWSPAASPQSS). Residues 560–570 (SMQGSSDETAN) show a composition bias toward polar residues. Positions 571 to 590 (SGEDGSSGPGSSSGHSDGSS) are enriched in low complexity. Positions 591-609 (NEVNSSHASQSAGSPGSEV) are enriched in polar residues. Over residues 610–653 (QSEDIADIEALKEEEEEEEEEEEEEEEEDDEEEEDEEEDDDDDD) the composition is skewed to acidic residues. Positions 684–697 (SQGTSERNGTNSGT) are enriched in polar residues. The segment covering 775–798 (HHHHHHHHHHHHHHHHHHHHHHHD) has biased composition (basic residues). Positions 1504–1514 (PDSDDSSEDQV) are enriched in acidic residues. Ser-1506 bears the Phosphoserine mark. The USP domain maps to 1931–2276 (VGLTNLGATC…SAYMLFYKRM (346 aa)). The active-site Nucleophile is the Cys-1940. His-2201 acts as the Proton acceptor in catalysis. A Phosphoserine modification is found at Ser-2525. Residues 3369-3484 (SLQEQEAKER…QSNNGRFDDC (116 aa)) form a disordered region. Basic and acidic residues predominate over residues 3373–3384 (QEAKERKTKDDE). Phosphoserine is present on residues Ser-3395 and Ser-3396. A Phosphothreonine modification is found at Thr-3418. Phosphoserine is present on residues Ser-3423 and Ser-3443. Residues 3463–3484 (DGSHIRSQHAEEQSNNGRFDDC) are compositionally biased toward basic and acidic residues. Ser-3539 is subject to Phosphoserine.

It belongs to the peptidase C19 family. Interacts with AXIN1 and AXIN2.

It carries out the reaction Thiol-dependent hydrolysis of ester, thioester, amide, peptide and isopeptide bonds formed by the C-terminal Gly of ubiquitin (a 76-residue protein attached to proteins as an intracellular targeting signal).. Ubiquitin hydrolase that can remove conjugated ubiquitin from AXIN1 and AXIN2, thereby acting as a regulator of Wnt signaling pathway. Acts as an activator of the Wnt signaling pathway downstream of the beta-catenin destruction complex by deubiquitinating and stabilizing AXIN1 and AXIN2, leading to promote nuclear accumulation of AXIN1 and AXIN2 and positively regulate beta-catenin (CTNBB1)-mediated transcription. Recognizes and hydrolyzes the peptide bond at the C-terminal Gly of ubiquitin. Involved in the processing of poly-ubiquitin precursors as well as that of ubiquitinated proteins. The sequence is that of Ubiquitin carboxyl-terminal hydrolase 34 (Usp34) from Mus musculus (Mouse).